The sequence spans 124 residues: Small ribosomal subunit protein uS12 (124 aa).

Positions 1–22 (MATINQLVRKPRSRKVAKSDVP) are disordered. Asp-89 is subject to 3-methylthioaspartic acid. Positions 104 to 124 (TAGVNDRRQGRSKYGAKRGKS) are disordered. Positions 113 to 124 (GRSKYGAKRGKS) are enriched in basic residues.

This sequence belongs to the universal ribosomal protein uS12 family. Part of the 30S ribosomal subunit. Contacts proteins S8 and S17. May interact with IF1 in the 30S initiation complex.

Its function is as follows. With S4 and S5 plays an important role in translational accuracy. In terms of biological role, interacts with and stabilizes bases of the 16S rRNA that are involved in tRNA selection in the A site and with the mRNA backbone. Located at the interface of the 30S and 50S subunits, it traverses the body of the 30S subunit contacting proteins on the other side and probably holding the rRNA structure together. The combined cluster of proteins S8, S12 and S17 appears to hold together the shoulder and platform of the 30S subunit. This chain is Small ribosomal subunit protein uS12, found in Hahella chejuensis (strain KCTC 2396).